Reading from the N-terminus, the 602-residue chain is Arginine--tRNA ligase (602 aa).

Residues 124 to 134 (ANPTGPVHVGR) carry the 'HIGH' region motif.

This sequence belongs to the class-I aminoacyl-tRNA synthetase family.

Its subcellular location is the cytoplasm. The catalysed reaction is tRNA(Arg) + L-arginine + ATP = L-arginyl-tRNA(Arg) + AMP + diphosphate. The polypeptide is Arginine--tRNA ligase (Halorubrum lacusprofundi (strain ATCC 49239 / DSM 5036 / JCM 8891 / ACAM 34)).